We begin with the raw amino-acid sequence, 45 residues long: Pyruvate dehydrogenase E1 component (45 aa).

As to quaternary structure, homodimer. Thiamine diphosphate serves as cofactor.

It carries out the reaction N(6)-[(R)-lipoyl]-L-lysyl-[protein] + pyruvate + H(+) = N(6)-[(R)-S(8)-acetyldihydrolipoyl]-L-lysyl-[protein] + CO2. Its function is as follows. The pyruvate dehydrogenase complex catalyzes the overall conversion of pyruvate to acetyl-CoA and CO(2). It contains multiple copies of three enzymatic components: pyruvate dehydrogenase (E1), dihydrolipoamide acetyltransferase (E2) and lipoamide dehydrogenase (E3). This chain is Pyruvate dehydrogenase E1 component, found in Azotobacter vinelandii.